A 657-amino-acid polypeptide reads, in one-letter code: Protein translocase subunit SecA 2 (657 aa).

Residues Q93, 111–115 (GEGKT), and D531 contribute to the ATP site.

Belongs to the SecA family. As to quaternary structure, monomer and homodimer. Part of the essential Sec protein translocation apparatus which comprises SecA, SecYEG and auxiliary proteins SecDF. Other proteins may also be involved.

It is found in the cell inner membrane. Its subcellular location is the cytoplasm. It carries out the reaction ATP + H2O + cellular proteinSide 1 = ADP + phosphate + cellular proteinSide 2.. Functionally, part of the Sec protein translocase complex. Interacts with the SecYEG preprotein conducting channel. Has a central role in coupling the hydrolysis of ATP to the transfer of proteins into and across the cell membrane, serving as an ATP-driven molecular motor driving the stepwise translocation of polypeptide chains across the membrane. The protein is Protein translocase subunit SecA 2 of Rhodopirellula baltica (strain DSM 10527 / NCIMB 13988 / SH1).